A 278-amino-acid chain; its full sequence is Bifunctional protein FolD (278 aa).

Residues 165–167 and Ser-190 each bind NADP(+); that span reads GRS.

This sequence belongs to the tetrahydrofolate dehydrogenase/cyclohydrolase family. In terms of assembly, homodimer.

It carries out the reaction (6R)-5,10-methylene-5,6,7,8-tetrahydrofolate + NADP(+) = (6R)-5,10-methenyltetrahydrofolate + NADPH. The catalysed reaction is (6R)-5,10-methenyltetrahydrofolate + H2O = (6R)-10-formyltetrahydrofolate + H(+). The protein operates within one-carbon metabolism; tetrahydrofolate interconversion. Its function is as follows. Catalyzes the oxidation of 5,10-methylenetetrahydrofolate to 5,10-methenyltetrahydrofolate and then the hydrolysis of 5,10-methenyltetrahydrofolate to 10-formyltetrahydrofolate. This Clostridium tetani (strain Massachusetts / E88) protein is Bifunctional protein FolD.